The sequence spans 200 residues: Large ribosomal subunit protein uL4 (200 aa).

Residues glycine 38–isoleucine 72 form a disordered region.

Belongs to the universal ribosomal protein uL4 family. In terms of assembly, part of the 50S ribosomal subunit.

Functionally, one of the primary rRNA binding proteins, this protein initially binds near the 5'-end of the 23S rRNA. It is important during the early stages of 50S assembly. It makes multiple contacts with different domains of the 23S rRNA in the assembled 50S subunit and ribosome. Its function is as follows. Forms part of the polypeptide exit tunnel. In Pseudomonas fluorescens (strain ATCC BAA-477 / NRRL B-23932 / Pf-5), this protein is Large ribosomal subunit protein uL4.